A 1011-amino-acid polypeptide reads, in one-letter code: Vacuolar membrane protease (1011 aa).

Residues 1 to 14 are Cytoplasmic-facing; it reads MKLTKAVFRFRRTN. Residues 15–35 form a helical membrane-spanning segment; sequence LSTLLVITYLVITTLYVWDHF. Residues 36–352 lie on the Vacuolar side of the membrane; the sequence is RYHFTLPSDY…WFVVWSARSL (317 aa). Zn(2+) is bound by residues His149, Asp161, Glu194, Glu219, and His293. A helical transmembrane segment spans residues 353 to 373; that stretch reads FYWNCIILALFPSILAILFLV. At 374 to 390 the chain is on the cytoplasmic side; the sequence is AYDMQLLKFNFWDAMLR. The helical transmembrane segment at 391–411 threads the bilayer; the sequence is LPVSVCLAYFCVKLFQVLVGQ. The Vacuolar segment spans residues 412–420; it reads LNPYVFSRD. Residues 421-441 traverse the membrane as a helical segment; it reads YVSPILAEASMFIFMNYVILS. The Cytoplasmic portion of the chain corresponds to 442 to 451; sequence SWERLRPLRD. Residues 452–472 traverse the membrane as a helical segment; it reads FKTVALVEVSMVLWIYLISVT. Over 473 to 487 the chain is Vacuolar; the sequence is RWLRDSDYTATGLYP. The helical transmembrane segment at 488–508 threads the bilayer; that stretch reads FTIGYTFVSIGAIIGVFCATF. Over 509-647 the chain is Cytoplasmic; that stretch reads KAKLNPEDDS…SILNYDWSIQ (139 aa). Positions 534-585 are disordered; sequence MQHQYQQHSQKHSNQHSPHHSTHHSAQHSVHHSPRQSIHQVPSSEQRQRDAS. A compositionally biased stretch (basic residues) spans 542 to 567; that stretch reads SQKHSNQHSPHHSTHHSAQHSVHHSP. Over residues 568–578 the composition is skewed to polar residues; the sequence is RQSIHQVPSSE. A helical transmembrane segment spans residues 648 to 668; it reads FMVVTPWVTYFTWICLDLIMG. Residues 669-681 lie on the Vacuolar side of the membrane; sequence AMNQTIQESAKGT. N-linked (GlcNAc...) asparagine glycosylation is present at Asn671. The helical transmembrane segment at 682–702 threads the bilayer; it reads TFVTHMALIGSLLLSLPMLPF. At 703–708 the chain is on the cytoplasmic side; the sequence is TYKLHS. The helical transmembrane segment at 709 to 729 threads the bilayer; sequence FAGMLFLLLAVTTAVWTIVAP. At 730–1011 the chain is on the vacuolar side; it reads PFTESSPLKL…MVSVTKYVEL (282 aa). Residues Asn751, Asn825, and Asn854 are each glycosylated (N-linked (GlcNAc...) asparagine).

This sequence belongs to the peptidase M28 family. Requires Zn(2+) as cofactor.

It localises to the vacuole membrane. Functionally, may be involved in vacuolar sorting and osmoregulation. This Eremothecium gossypii (strain ATCC 10895 / CBS 109.51 / FGSC 9923 / NRRL Y-1056) (Yeast) protein is Vacuolar membrane protease.